Reading from the N-terminus, the 289-residue chain is CBY1-interacting BAR domain-containing protein 1 (289 aa).

The transit peptide at 1–47 (MMRRTLENRNAQTKQLQTAVSNVEKHFGELCQIFAAYVRKTARLRDK) directs the protein to the mitochondrion. The BAR-like stretch occupies residues 10-220 (NAQTKQLQTA…NIDEDEDLEV (211 aa)). Positions 107–178 (KMKRDDLKAT…INNFERQKMK (72 aa)) form a coiled coil. The tract at residues 265–289 (LRKDQQAEDDEDDELDVTEEENFLK) is disordered. Over residues 271-289 (AEDDEDDELDVTEEENFLK) the composition is skewed to acidic residues.

Belongs to the CIBAR family. As to quaternary structure, homodimer (via BAR-like domain). Heterodimer with FAM92B (via BAR-like domains). Interacts (via BAR-like domain) with CBY1; this interaction is required for targeting FAM92A to centriole and cilium basal body. Interacts (via BAR-like domain) with CBY3; both proteins form a ninefold symmetric structure at the flagellar base; are recruited to the annulus in a mutually dependent manner and regulate annulus positionning.

The protein localises to the cytoplasm. Its subcellular location is the cytoskeleton. The protein resides in the microtubule organizing center. It localises to the centrosome. It is found in the centriole. The protein localises to the cilium basal body. Its subcellular location is the cell projection. The protein resides in the cilium. It localises to the nucleus. It is found in the mitochondrion inner membrane. The protein localises to the flagellum. In terms of biological role, plays a critical role in regulating mitochondrial ultrastructure and function by maintaining the integrity of mitochondrial morphology, particularly the organization of cristae. Preferentially binds to negatively charged phospholipids like cardiolipin and phosphatidylinositol 4,5-bisphosphate enhancing its interaction with mitochondrial membranes. Induces membrane curvature and tubulation, which are critical for maintaining mitochondrial ultrastructure and the organization of cristae. Plays a crucial role in ciliogenesis. May play a role in limb development through its role in ciliogenesis. Plays a key role in the correct positioning of the annulus, a septin-based ring structure in the sperm flagellum, serving both as a physical barrier and a membrane diffusion barrier that separates the midpiece (MP) from the principal piece (PP). This positioning is essential for proper sperm motility and function. Interacts with CBY3 to form a complex which localizes to the curved membrane region of the flagellar pocket. By doing so, may provide stability and rigidity to the periannular membrane to prevent membrane deformation. This function is crucial for halting annulus migration at the proximal end of the fibrous sheath-containing PP. The sequence is that of CBY1-interacting BAR domain-containing protein 1 from Homo sapiens (Human).